Consider the following 1299-residue polypeptide: Tubulin polyglutamylase TTLL5 (1299 aa).

In terms of domain architecture, TTL spans 62–407 (RYHLSYKIVR…VCQDPAQRAS (346 aa)). Residues K180, 186–187 (RG), 208–211 (SRYI), and 221–223 (KFD) each bind ATP. R186 contacts a protein. R247 is a binding site for L-glutamate. 268–269 (TN) lines the ATP pocket. Positions 270, 271, and 293 each coordinate L-glutamate. D353, E366, and N368 together coordinate Mg(2+). The c-MTBD region stretch occupies residues 378–488 (PLDLKIKASM…RGGFIRIFPT (111 aa)). An L-glutamate-binding site is contributed by K384. 5 disordered regions span residues 589 to 626 (EMNV…FLRE), 832 to 853 (GTHS…KGDH), 918 to 941 (SSVT…IPSA), 1088 to 1130 (RSSA…RSLQ), and 1217 to 1275 (SSAT…QLNG). The span at 597–617 (ESEEEEEVALDNEEEEQEASQ) shows a compositional bias: acidic residues. Residues 838-847 (SKNNNSYSDS) show a composition bias toward low complexity. Composition is skewed to polar residues over residues 1104–1130 (SGPT…RSLQ), 1217–1230 (SSAT…TTLP), and 1258–1275 (ATSQ…QLNG).

The protein belongs to the tubulin--tyrosine ligase family. In terms of assembly, interacts with the transcriptional coactivators NCOA1/SRC-1 and NCOA2/TIF2. Requires Mg(2+) as cofactor.

It localises to the cell projection. The protein resides in the cilium. Its subcellular location is the cytoplasm. The protein localises to the cytoskeleton. It is found in the cilium basal body. It localises to the nucleus. The enzyme catalyses L-glutamyl-[protein] + L-glutamate + ATP = gamma-L-glutamyl-L-glutamyl-[protein] + ADP + phosphate + H(+). It carries out the reaction (L-glutamyl)(n)-gamma-L-glutamyl-L-glutamyl-[protein] + L-glutamate + ATP = (L-glutamyl)(n+1)-gamma-L-glutamyl-L-glutamyl-[protein] + ADP + phosphate + H(+). Polyglutamylase which modifies tubulin, generating polyglutamate side chains on the gamma-carboxyl group of specific glutamate residues within the C-terminal tail of tubulin. Preferentially mediates ATP-dependent initiation step of the polyglutamylation reaction over the elongation step. Preferentially modifies the alpha-tubulin tail over a beta-tail. Required for CCSAP localization to both polyglutamylated spindle and cilia microtubules. Increases the effects of transcriptional coactivator NCOA2/TIF2 in glucocorticoid receptor-mediated repression and induction and in androgen receptor-mediated induction. The polypeptide is Tubulin polyglutamylase TTLL5 (TTLL5) (Pongo abelii (Sumatran orangutan)).